The chain runs to 1203 residues: Metabotropic glutamate receptor 5 (1203 aa).

The signal sequence occupies residues Met1–Gly18. Topologically, residues Ser19 to Pro579 are extracellular. A disulfide bond links Cys57 and Cys99. Tyr64 is a binding site for L-glutamate. N-linked (GlcNAc...) asparagine glycosylation is present at Asn88. L-glutamate-binding positions include Ser151 and Ser172 to Thr174. Asn209 carries N-linked (GlcNAc...) asparagine glycosylation. Tyr222 serves as a coordination point for L-glutamate. 8 disulfide bridges follow: Cys240–Cys529, Cys275–Cys277, Cys364–Cys380, Cys418–Cys425, Cys510–Cys530, Cys514–Cys533, Cys536–Cys548, and Cys551–Cys564. Residue Asp304 coordinates L-glutamate. Residues Asn377 and Asn381 are each glycosylated (N-linked (GlcNAc...) asparagine). Residue Lys395 participates in L-glutamate binding. Asn444 carries an N-linked (GlcNAc...) asparagine glycan. Residues Ile580–Ile602 form a helical membrane-spanning segment. The Cytoplasmic segment spans residues Tyr603 to Ser612. The chain crosses the membrane as a helical span at residues Ser613 to Ile635. Residues Ala636–Cys643 are Extracellular-facing. Cys643 and Cys732 are disulfide-bonded. The chain crosses the membrane as a helical span at residues Tyr644–Asn666. At Arg667–Gln692 the chain is on the cytoplasmic side. Residues Leu693–Met713 traverse the membrane as a helical segment. At Glu714–Asn736 the chain is on the extracellular side. Asn733 carries N-linked (GlcNAc...) asparagine glycosylation. The helical transmembrane segment at Leu737 to Phe758 threads the bilayer. At Lys759–Lys771 the chain is on the cytoplasmic side. A helical transmembrane segment spans residues Tyr772–Ser794. Residues Asn795 to Lys797 are Extracellular-facing. A helical membrane pass occupies residues Ile798–Pro819. The Cytoplasmic segment spans residues Lys820 to Leu1203. The residue at position 860 (Ser860) is a Phosphoserine. Arg868 carries the omega-N-methylarginine modification. Disordered stretches follow at residues Phe892–Met1054 and Thr1120–Ile1182. Positions Thr905–Glu920 are enriched in polar residues. At Arg924 the chain carries Omega-N-methylarginine. Positions Gln960–Ser977 are enriched in gly residues. Residues Pro1007 to Ser1019 show a composition bias toward low complexity. Phosphoserine occurs at positions 1014 and 1016. 2 stretches are compositionally biased toward polar residues: residues His1039–Met1054 and Asp1165–Ser1176.

It belongs to the G-protein coupled receptor 3 family. The PPXXF motif binds HOMER1, HOMER2 and HOMER3. Interacts with RYR1, RYR2, ITPR1, SHANK1 and SHANK3. Interacts with SIAH1 and TAMALIN. Interacts with NCDN. Interacts with NECAB2. Interacts with CAMK2A.

Its subcellular location is the cell membrane. G-protein coupled receptor for glutamate. Ligand binding causes a conformation change that triggers signaling via guanine nucleotide-binding proteins (G proteins) and modulates the activity of down-stream effectors. Signaling activates a phosphatidylinositol-calcium second messenger system and generates a calcium-activated chloride current. Plays an important role in the regulation of synaptic plasticity and the modulation of the neural network activity. The sequence is that of Metabotropic glutamate receptor 5 (Grm5) from Mus musculus (Mouse).